The following is a 300-amino-acid chain: Cytochrome f (300 aa).

Positions 1–32 are cleaved as a signal peptide; sequence MMTYLSKQFSKLLFGQLLFLFIGNLLLKPVQA. Positions 33, 53, 56, and 57 each coordinate heme. A helical transmembrane segment spans residues 267 to 287; that stretch reads LKTFIAFCVTVFIGQLAFVLK.

This sequence belongs to the cytochrome f family. In terms of assembly, the 4 large subunits of the cytochrome b6-f complex are cytochrome b6, subunit IV (17 kDa polypeptide, petD), cytochrome f and the Rieske protein, while the 4 small subunits are PetG, PetL, PetM and PetN. The complex functions as a dimer. Heme is required as a cofactor.

It localises to the plastid. The protein resides in the chloroplast thylakoid membrane. Component of the cytochrome b6-f complex, which mediates electron transfer between photosystem II (PSII) and photosystem I (PSI), cyclic electron flow around PSI, and state transitions. This chain is Cytochrome f, found in Cyanidioschyzon merolae (strain NIES-3377 / 10D) (Unicellular red alga).